Here is a 256-residue protein sequence, read N- to C-terminus: tRNA pseudouridine synthase A (256 aa).

Asp52 functions as the Nucleophile in the catalytic mechanism. Tyr110 contributes to the substrate binding site.

Belongs to the tRNA pseudouridine synthase TruA family. Homodimer.

The catalysed reaction is uridine(38/39/40) in tRNA = pseudouridine(38/39/40) in tRNA. Its function is as follows. Formation of pseudouridine at positions 38, 39 and 40 in the anticodon stem and loop of transfer RNAs. The protein is tRNA pseudouridine synthase A of Stenotrophomonas maltophilia (strain K279a).